A 681-amino-acid polypeptide reads, in one-letter code: Transmembrane protein 214-A (681 aa).

2 disordered regions span residues 1 to 41 and 58 to 99; these read MASG…GTAP and KKQN…GSRQ. Residues asparagine 300 and asparagine 324 are each glycosylated (N-linked (GlcNAc...) asparagine). The next 2 membrane-spanning stretches (helical) occupy residues 471 to 491 and 608 to 628; these read GFPW…FVFY and LLLH…EAAV.

This sequence belongs to the TMEM214 family. In terms of assembly, constitutively interacts with CASP4; required for the localization of procaspase 4 to the ER.

Its subcellular location is the endoplasmic reticulum membrane. Critical mediator, in cooperation with CASP4, of endoplasmic reticulum-stress induced apoptosis. Required or the activation of CASP4 following endoplasmic reticulum stress. The protein is Transmembrane protein 214-A (tmem214-a) of Xenopus laevis (African clawed frog).